Reading from the N-terminus, the 239-residue chain is MKLLALSLASLASAATITRRADFCGQWDTATAGNFIVYNNLWGQDNADSGSQCTGVDSANGNSVSWHTTWSWSGGSSSVKSYANAAYQFTATQLSSLSSIPSTWEWQYSTTDVVANVAYDLFTSSSIGGDSEYEIMIWLAALGGAGPISSTGSSIATVTLGGVTWNLYSGPNGSMQVYSFVASSTTESFSADLMDFINYLVENQGLSNSQYLTHVQAGTEPFTGSDATLTVSSYSVSVS.

The signal sequence occupies residues 1–14; that stretch reads MKLLALSLASLASA. N-linked (GlcNAc...) asparagine glycosylation occurs at N172.

The protein belongs to the glycosyl hydrolase 12 (cellulase H) family.

The protein localises to the secreted. It catalyses the reaction xyloglucan + H2O = xyloglucan oligosaccharides.. Catalyzes endohydrolysis of 1,4-beta-D-glucosidic linkages in xyloglucan with retention of the beta-configuration of the glycosyl residues. Specific for xyloglucan and does not hydrolyze other cell wall components. Active against tamarind xyloglucan. The sequence is that of Xyloglucan-specific endo-beta-1,4-glucanase A (xgeA) from Emericella nidulans (strain FGSC A4 / ATCC 38163 / CBS 112.46 / NRRL 194 / M139) (Aspergillus nidulans).